Here is an 89-residue protein sequence, read N- to C-terminus: UPF0213 protein HQ_3675A (89 aa).

The GIY-YIG domain occupies 3 to 78; it reads DYHYVYIVEC…KSYTREKKQQ (76 aa).

The protein belongs to the UPF0213 family.

The polypeptide is UPF0213 protein HQ_3675A (Haloquadratum walsbyi (strain DSM 16790 / HBSQ001)).